The sequence spans 377 residues: MAKQDYYEILGVERGADEKAIKKAYKRLAMKYHPDRTKGDKTSEEKFKEINEAYEILSDKEKRAAYDQYGHAAFEQGGFGGAGAGGFGGGFGGFGGFEDIFSEMFGGGSSRQRVVRGDDLRYDIEITLEEAVRGITKDIQIQTLATCDHCNGSGAEKGSKVETCPTCHGHGRVRRQQGFFMTETTCPHCHGTGKKIEKPCKKCHGDGRVHKTESLSVKIPAGVDTGNQLRLAGKGAAGENGAPAGDLYVVIHVKEHHIFERDGNNLYCEVPISFTQAALGGEIEVPTLDGRAKLKIPEGTQTGTMFRMRGKGITAMRSGYSGDLICKITVETPVKLTDEQKDLLHKLEASLEGKTTQRPKSSSFLDGVKKFFDNLGK.

The J domain occupies 5 to 70 (DYYEILGVER…EKRAAYDQYG (66 aa)). Residues 134–212 (GITKDIQIQT…CHGDGRVHKT (79 aa)) form a CR-type zinc finger. 8 residues coordinate Zn(2+): Cys147, Cys150, Cys164, Cys167, Cys186, Cys189, Cys200, and Cys203. 4 CXXCXGXG motif repeats span residues 147–154 (CDHCNGSG), 164–171 (CPTCHGHG), 186–193 (CPHCHGTG), and 200–207 (CKKCHGDG).

It belongs to the DnaJ family. As to quaternary structure, homodimer. Zn(2+) is required as a cofactor.

The protein resides in the cytoplasm. Functionally, participates actively in the response to hyperosmotic and heat shock by preventing the aggregation of stress-denatured proteins and by disaggregating proteins, also in an autonomous, DnaK-independent fashion. Unfolded proteins bind initially to DnaJ; upon interaction with the DnaJ-bound protein, DnaK hydrolyzes its bound ATP, resulting in the formation of a stable complex. GrpE releases ADP from DnaK; ATP binding to DnaK triggers the release of the substrate protein, thus completing the reaction cycle. Several rounds of ATP-dependent interactions between DnaJ, DnaK and GrpE are required for fully efficient folding. Also involved, together with DnaK and GrpE, in the DNA replication of plasmids through activation of initiation proteins. This Actinobacillus succinogenes (strain ATCC 55618 / DSM 22257 / CCUG 43843 / 130Z) protein is Chaperone protein DnaJ.